The chain runs to 194 residues: MSFAEKITGLLARPNQQDPIGPEQPWYLKYGSRLLGIVAAFFAILFGLWNVFSIITLSVSCLVAGIIQMVAGFVVMLLEALCCFVCFEQVNVIADKVDSKPLYFRAGLYIAMAIPPIILCFGLASLFGSGLIFGTGVVYGMMALGKKASAEDMRAAAQQTFGGNTPAQTNDRAGIVNNAQPFSFTGAVGTDSNV.

3 consecutive transmembrane segments (helical) span residues 35–55 (LGIV…FSII), 66–88 (IIQM…VCFE), and 107–127 (GLYI…ASLF).

It belongs to the calcium channel flower family. Homomultimer. Associates with the dally/ magu complex.

It localises to the cell membrane. Its subcellular location is the cytoplasmic vesicle. The protein localises to the secretory vesicle. It is found in the synaptic vesicle membrane. The protein resides in the presynaptic cell membrane. It localises to the endosome. Channel activity is inhibited by La(3+), which reduces Ca(2+) influx and thus inhibits it's function in promoting activity-dependent bulk endocytosis (ADBE) in response to high stimuli. In terms of biological role, transmembrane protein which mediates synaptic endocytosis, fitness-based cell culling, neuronal culling, morphogen gradient scaling, and calcium transport. Regulates synaptic endocytosis and hence couples exo- with endocytosis. Controls two major modes of synaptic vesicle (SV) endocytosis in the synaptic boutons of neuromuscular junctions (NMJs); Ca(2+) channel-independent Clathrin-mediated endocytosis (CME) in response to mild stimulation, and Ca(2+) channel-dependent activity-dependent bulk endocytosis (ADBE) in response to strong stimulation. Functions in ADBE and subsequent SV reformation from bulk endosomes by initiating Ca(2+) channel-dependent phosphatidylinositol 4,5-bisphosphate (PtdIns(4,5)P2) compartmentalization in synaptic boutons. There it acts at the periactive zone to provide the low Ca(2+) levels required to initiate Calcineurin activation and upregulate PtdIns(4,5)P2. Conversely PtdIns(4,5)P2 enhances fwe Ca(2+) channel-activity, establishing a positive feedback loop that induces PtdIns(4,5)P2 microdomain at the periactive zone. These microdomains trigger bulk membrane invagination (i.e. ADBE) by triggering actin polymerization while also promoting localization of fwe to bulk endosomes, thereby removing the ADBE trigger to reduce endocytosis and prevent excess membrane uptake. PtdIns(4,5)P2 then promotes SV reformation from the bulk endosomes, to coordinate ADBE and subsequent SV reformation. Different combinations of the flower isoforms at the cell membrane are also required for the identification and elimination of suboptimal or supernumerary cells during development, regeneration, and adulthood. Required for the recognition and elimination of unfit cells in the developing wing during cell competition. In the developing pupal retina, mediates the elimination of unwanted postmitotic neurons, including supernumerary photoreceptor neurons that form at the periphery of the retina and are contained within incomplete ommatidia units. Also required for efficient elimination and replacement of old neurons by newly generated neurons during regeneration in the adult brain following mechanical injury. Downstream of the flower fitness fingerprints, cells identified as unwanted or unfit are eliminated via apoptosis through the expression of ahuizotl (azot). However, the cells marked for elimination by the flower isoforms only undergo apoptosis if additional thresholds are met; (1) their neighboring fit/healthy cells express different levels of the fwe isoforms, and (2) the levels of the protective signal SPARC expressed by the loser or unwanted cells are unable to inhibit caspase activation. These additional thresholds for flower-mediated apoptosis, allows useful cells to recover from transient and limited stress before they are unnecessarily eliminated. Functions with dally and magu in a mechanism of scaling, which utilises apoptosis to ensure that the dpp morphogen gradient, which mediates organ growth, remains proportional to the size of the growing wing. In this mechanism, fwe represses dally- and Magu-dependent activity in expanding the gradient, and dally/Magu inhibits fwe-dependent apoptosis to keep cell death rate low. When the levels of these different proteins are optimally regulated the gradient correctly scales with organ growth but when this fails, fwe-mediated apoptosis is activated to trim the developing tissue to match the correct size of the gradient. This Drosophila sechellia (Fruit fly) protein is Calcium channel flower.